The primary structure comprises 116 residues: uncharacterized protein (116 aa).

The CHY-type zinc finger occupies 1 to 72; it reads MCKHVLNAQV…SDEYCPNCDN (72 aa). Zn(2+)-binding residues include Cys-2, His-4, Cys-16, Cys-17, Cys-23, Cys-26, His-27, His-33, Cys-45, Cys-48, Cys-67, and Cys-70.

It is found in the cytoplasm. This is an uncharacterized protein from Schizosaccharomyces pombe (strain 972 / ATCC 24843) (Fission yeast).